The sequence spans 127 residues: Putative defensin-like protein 180 (127 aa).

A signal peptide spans 1 to 26 (MERITSLVFFASFLIIFVSGVNQTRA). 8 disulfides stabilise this stretch: Cys29–Cys70, Cys36–Cys55, Cys39–Cys64, Cys43–Cys66, Cys81–Cys127, Cys92–Cys112, Cys97–Cys121, and Cys101–Cys123.

The protein belongs to the DEFL family.

It localises to the secreted. The sequence is that of Putative defensin-like protein 180 (LCR58) from Arabidopsis thaliana (Mouse-ear cress).